The chain runs to 129 residues: Ribosome-binding factor A (129 aa).

It belongs to the RbfA family. As to quaternary structure, monomer. Binds 30S ribosomal subunits, but not 50S ribosomal subunits or 70S ribosomes.

It is found in the cytoplasm. Functionally, one of several proteins that assist in the late maturation steps of the functional core of the 30S ribosomal subunit. Associates with free 30S ribosomal subunits (but not with 30S subunits that are part of 70S ribosomes or polysomes). Required for efficient processing of 16S rRNA. May interact with the 5'-terminal helix region of 16S rRNA. In Azotobacter vinelandii (strain DJ / ATCC BAA-1303), this protein is Ribosome-binding factor A.